The sequence spans 198 residues: Nucleoid occlusion factor SlmA (198 aa).

One can recognise an HTH tetR-type domain in the interval 10–70; that stretch reads NRREEILQSL…SLIEFIEDSL (61 aa). The H-T-H motif DNA-binding region spans 33–52; the sequence is TTAKLAASVGVSEAALYRHF. Residues 117–144 adopt a coiled-coil conformation; that stretch reads EQDRLQGRINQLFERIEAQLRQVLREKR.

This sequence belongs to the nucleoid occlusion factor SlmA family. Homodimer. Interacts with FtsZ.

It localises to the cytoplasm. Its subcellular location is the nucleoid. In terms of biological role, required for nucleoid occlusion (NO) phenomenon, which prevents Z-ring formation and cell division over the nucleoid. Acts as a DNA-associated cell division inhibitor that binds simultaneously chromosomal DNA and FtsZ, and disrupts the assembly of FtsZ polymers. SlmA-DNA-binding sequences (SBS) are dispersed on non-Ter regions of the chromosome, preventing FtsZ polymerization at these regions. The protein is Nucleoid occlusion factor SlmA of Salmonella dublin (strain CT_02021853).